The chain runs to 238 residues: tRNA (guanine-N(7)-)-methyltransferase (238 aa).

Positions 71, 96, 123, and 146 each coordinate S-adenosyl-L-methionine. The active site involves aspartate 146. Substrate-binding positions include lysine 150, aspartate 182, and 217-220 (TKFE).

It belongs to the class I-like SAM-binding methyltransferase superfamily. TrmB family.

The enzyme catalyses guanosine(46) in tRNA + S-adenosyl-L-methionine = N(7)-methylguanosine(46) in tRNA + S-adenosyl-L-homocysteine. Its pathway is tRNA modification; N(7)-methylguanine-tRNA biosynthesis. Catalyzes the formation of N(7)-methylguanine at position 46 (m7G46) in tRNA. In Methylobacillus flagellatus (strain ATCC 51484 / DSM 6875 / VKM B-1610 / KT), this protein is tRNA (guanine-N(7)-)-methyltransferase.